The sequence spans 196 residues: Pyridoxal 5'-phosphate synthase subunit PdxT (196 aa).

Position 46–48 (46–48 (GES)) interacts with L-glutamine. Cys78 serves as the catalytic Nucleophile. L-glutamine-binding positions include Arg105 and 134–135 (IR). Active-site charge relay system residues include His170 and Glu172.

Belongs to the glutaminase PdxT/SNO family. In terms of assembly, in the presence of PdxS, forms a dodecamer of heterodimers. Only shows activity in the heterodimer.

The catalysed reaction is aldehydo-D-ribose 5-phosphate + D-glyceraldehyde 3-phosphate + L-glutamine = pyridoxal 5'-phosphate + L-glutamate + phosphate + 3 H2O + H(+). The enzyme catalyses L-glutamine + H2O = L-glutamate + NH4(+). Its pathway is cofactor biosynthesis; pyridoxal 5'-phosphate biosynthesis. In terms of biological role, catalyzes the hydrolysis of glutamine to glutamate and ammonia as part of the biosynthesis of pyridoxal 5'-phosphate. The resulting ammonia molecule is channeled to the active site of PdxS. This Pelotomaculum thermopropionicum (strain DSM 13744 / JCM 10971 / SI) protein is Pyridoxal 5'-phosphate synthase subunit PdxT.